The chain runs to 137 residues: Small ribosomal subunit protein uS9 (137 aa).

The segment at 105-137 (LKAEGYLTRDPRAKERKKYGLHKARKAPQYSKR) is disordered. Positions 118–137 (KERKKYGLHKARKAPQYSKR) are enriched in basic residues.

It belongs to the universal ribosomal protein uS9 family.

The protein is Small ribosomal subunit protein uS9 (rpsI) of Synechocystis sp. (strain ATCC 27184 / PCC 6803 / Kazusa).